A 163-amino-acid chain; its full sequence is Probable ribosome biogenesis protein RLP24 (163 aa).

The protein belongs to the eukaryotic ribosomal protein eL24 family. In terms of assembly, associated with nucleolar and cytoplasmic pre-60S particles. At the end of biogenesis it dissociates from cytoplasmic pre-60S particles and is likely to be exchanged for its ribosomal homolog, RPL24.

The protein localises to the nucleus. The protein resides in the nucleolus. Functionally, involved in the biogenesis of the 60S ribosomal subunit. Ensures the docking of GTPBP4/NOG1 to pre-60S particles. This chain is Probable ribosome biogenesis protein RLP24 (Rsl24d1), found in Mus musculus (Mouse).